We begin with the raw amino-acid sequence, 256 residues long: Catechol O-methyltransferase A (256 aa).

The first 27 residues, Met-1–Ala-27, serve as a signal peptide directing secretion. Residue Asn-58 is glycosylated (N-linked (GlcNAc...) asparagine). S-adenosyl-L-methionine is bound by residues Val-84, Ser-114, Glu-132, and Asp-183. Asp-183 is a Mg(2+) binding site. Lys-186 is a substrate binding site. Positions 211 and 212 each coordinate Mg(2+). Residues Asn-212 and Glu-241 each coordinate substrate.

The protein belongs to the class I-like SAM-binding methyltransferase superfamily. Cation-dependent O-methyltransferase family. The cofactor is Mg(2+). In terms of tissue distribution, widely expressed. Has higher expression in females compared to males. Strongly expressed in liver and diencephalon. Expressed at lower levels in hindbrain, spinal cord, eye, telencephalon, spleen, gut, gill and muscle. Detected in ovary and testis. In eye, detected in all layers of the retina with highest expression in the inner nuclear layer. In gut, expressed in the lamina propria but has little or no expression in gut epithelium. In brain, has strongest expression near the midline of the telencephalon, in the periventricular gray zone of the optic tectum, in the preglomerular nucleus, and near the walls of the diencephalic ventricle.

It is found in the secreted. It carries out the reaction a catechol + S-adenosyl-L-methionine = a guaiacol + S-adenosyl-L-homocysteine + H(+). Its function is as follows. Catalyzes the O-methylation, and thereby the inactivation, of catecholamine neurotransmitters and catechol hormones. Shows highest activity towards catecholestrogens and dobutamine. Also has lower activity towards L-DOPA, dopamine and epinephrine. Active towards the xenobiotic compounds methyl-DOPA, carbidopa, isoproterenol, and apomorphine. This Danio rerio (Zebrafish) protein is Catechol O-methyltransferase A.